The sequence spans 321 residues: Olfactory receptor 5P60 (321 aa).

Over Met1–Ile28 the chain is Extracellular. Asn8 carries an N-linked (GlcNAc...) asparagine glycan. A helical membrane pass occupies residues Val29–Ile49. At Leu50–Gln57 the chain is on the cytoplasmic side. A helical transmembrane segment spans residues Leu58–Ser78. The Extracellular segment spans residues Ser79 to Ile102. An intrachain disulfide couples Cys100 to Cys192. A helical membrane pass occupies residues Gln103–Tyr123. At Asp124–Ser136 the chain is on the cytoplasmic side. The chain crosses the membrane as a helical span at residues Thr137–Leu157. The Extracellular segment spans residues Asn158–Val199. The chain crosses the membrane as a helical span at residues Leu200–Ser220. Residues Tyr221 to Ala240 are Cytoplasmic-facing. The helical transmembrane segment at Phe241–Ile261 threads the bilayer. The Extracellular portion of the chain corresponds to Tyr262 to Asn274. The helical transmembrane segment at Lys275–Leu295 threads the bilayer. Residues Arg296–Tyr321 lie on the Cytoplasmic side of the membrane.

The protein belongs to the G-protein coupled receptor 1 family.

It is found in the cell membrane. Functionally, potential odorant receptor. The chain is Olfactory receptor 5P60 from Mus musculus (Mouse).